The sequence spans 417 residues: Serine hydroxymethyltransferase 1 (417 aa).

(6S)-5,6,7,8-tetrahydrofolate is bound by residues L121 and 125-127 (GHL). N6-(pyridoxal phosphate)lysine is present on K229. 354 to 356 (SPF) is a binding site for (6S)-5,6,7,8-tetrahydrofolate.

It belongs to the SHMT family. In terms of assembly, homodimer. The cofactor is pyridoxal 5'-phosphate.

The protein localises to the cytoplasm. The enzyme catalyses (6R)-5,10-methylene-5,6,7,8-tetrahydrofolate + glycine + H2O = (6S)-5,6,7,8-tetrahydrofolate + L-serine. It functions in the pathway one-carbon metabolism; tetrahydrofolate interconversion. Its pathway is amino-acid biosynthesis; glycine biosynthesis; glycine from L-serine: step 1/1. Functionally, catalyzes the reversible interconversion of serine and glycine with tetrahydrofolate (THF) serving as the one-carbon carrier. This reaction serves as the major source of one-carbon groups required for the biosynthesis of purines, thymidylate, methionine, and other important biomolecules. Also exhibits THF-independent aldolase activity toward beta-hydroxyamino acids, producing glycine and aldehydes, via a retro-aldol mechanism. In Pseudomonas savastanoi pv. phaseolicola (strain 1448A / Race 6) (Pseudomonas syringae pv. phaseolicola (strain 1448A / Race 6)), this protein is Serine hydroxymethyltransferase 1.